The chain runs to 164 residues: NADH-quinone oxidoreductase subunit I 2 (164 aa).

2 4Fe-4S ferredoxin-type domains span residues 39-71 and 81-110; these read IVLTRDPDGQERCVACNLCAAACPVDCIDVVKA and ESFRINFARCIFCGYCEEACPTSAIQLTPD. [4Fe-4S] cluster-binding residues include C51, C54, C57, C61, C90, C93, C96, and C100.

The protein belongs to the complex I 23 kDa subunit family. As to quaternary structure, NDH-1 is composed of 14 different subunits. Subunits NuoA, H, J, K, L, M, N constitute the membrane sector of the complex. The cofactor is [4Fe-4S] cluster.

It is found in the cell inner membrane. It carries out the reaction a quinone + NADH + 5 H(+)(in) = a quinol + NAD(+) + 4 H(+)(out). NDH-1 shuttles electrons from NADH, via FMN and iron-sulfur (Fe-S) centers, to quinones in the respiratory chain. The immediate electron acceptor for the enzyme in this species is believed to be ubiquinone. Couples the redox reaction to proton translocation (for every two electrons transferred, four hydrogen ions are translocated across the cytoplasmic membrane), and thus conserves the redox energy in a proton gradient. The chain is NADH-quinone oxidoreductase subunit I 2 from Cereibacter sphaeroides (strain ATCC 17023 / DSM 158 / JCM 6121 / CCUG 31486 / LMG 2827 / NBRC 12203 / NCIMB 8253 / ATH 2.4.1.) (Rhodobacter sphaeroides).